Here is a 383-residue protein sequence, read N- to C-terminus: uncharacterized protein (383 aa).

This sequence belongs to the peptidase M20 family.

This is an uncharacterized protein from Staphylococcus aureus (strain bovine RF122 / ET3-1).